Reading from the N-terminus, the 126-residue chain is UPF0538 protein C2orf76 homolog (126 aa).

Belongs to the UPF0538 family.

This is UPF0538 protein C2orf76 homolog from Xenopus tropicalis (Western clawed frog).